Reading from the N-terminus, the 268-residue chain is Hemin import ATP-binding protein HmuV (268 aa).

One can recognise an ABC transporter domain in the interval 5–241; that stretch reads LKAEAASFAL…ELIADVFDVA (237 aa). 37 to 44 provides a ligand contact to ATP; it reads GPNGAGKS.

This sequence belongs to the ABC transporter superfamily. Heme (hemin) importer (TC 3.A.1.14.5) family. The complex is composed of two ATP-binding proteins (HmuV), two transmembrane proteins (HmuU) and a solute-binding protein (HmuT).

It is found in the cell inner membrane. Part of the ABC transporter complex HmuTUV involved in hemin import. Responsible for energy coupling to the transport system. This Rhodopseudomonas palustris (strain ATCC BAA-98 / CGA009) protein is Hemin import ATP-binding protein HmuV.